We begin with the raw amino-acid sequence, 567 residues long: 25S rRNA (cytosine-C(5))-methyltransferase NSUN5 (567 aa).

A compositionally biased stretch (basic residues) spans 1–17; the sequence is MVARRNKPKAPLVKHRF. Residues 1 to 88 are disordered; the sequence is MVARRNKPKA…KTPPATKQKF (88 aa). Residues 312–318, Glu-336, Asp-363, and Asp-383 each bind S-adenosyl-L-methionine; that span reads CSAPGNK. Cys-444 functions as the Nucleophile in the catalytic mechanism.

It belongs to the class I-like SAM-binding methyltransferase superfamily. RsmB/NOP family.

The catalysed reaction is a cytidine in 25S rRNA + S-adenosyl-L-methionine = a 5-methylcytidine in 25S rRNA + S-adenosyl-L-homocysteine + H(+). In terms of biological role, S-adenosyl-L-methionine-dependent methyltransferase that specifically methylates the C(5) position of cytosine 2268 (m5C2268) in 25S rRNA. The chain is 25S rRNA (cytosine-C(5))-methyltransferase NSUN5 from Arabidopsis thaliana (Mouse-ear cress).